Reading from the N-terminus, the 1327-residue chain is P-glycoprotein 14 (1327 aa).

Over residues 1-17 the composition is skewed to basic and acidic residues; the sequence is MAPKDDPDNRGFDDQRR. Residues 1 to 23 are disordered; sequence MAPKDDPDNRGFDDQRRPSQRST. Topologically, residues 1 to 104 are cytoplasmic; it reads MAPKDDPDNR…RYGKKFDYLL (104 aa). The chain crosses the membrane as a helical span at residues 105 to 125; sequence LFIGTICAIISGVSQPILALV. Positions 106–394 constitute an ABC transmembrane type-1 1 domain; that stretch reads FIGTICAIIS…ISPHMMVLLN (289 aa). At 126 to 151 the chain is on the extracellular side; it reads SGRVTNALLVYPPTSKQFRNKANENV. The helical transmembrane segment at 152–172 threads the bilayer; that stretch reads YIFLGIGIFISITNFIQYMCF. Over 173–225 the chain is Cytoplasmic; sequence QHCCTRVMAQMRHRFVYSVLRQNAGWFDKNHSGTITTKLNDSMERIREGIGDK. Residues 226–246 form a helical membrane-spanning segment; sequence LGVLLRGFAMLIAAIVVAYIY. Glu247 is a topological domain (extracellular). The chain crosses the membrane as a helical span at residues 248 to 268; sequence WRLASMMLGVAPTCCICMSLL. At 269–331 the chain is on the cytoplasmic side; sequence ARQMTSTTIK…KFAVWKGFWS (63 aa). Residues 332-352 form a helical membrane-spanning segment; that stretch reads GFFGGLFFFWLFSFLGCGMLY. Residues 353–364 are Extracellular-facing; it reads GAYLLKVGIITT. A helical membrane pass occupies residues 365–385; that stretch reads PGDVFIVVMSMLLGAYFLGLI. Residues 386 to 766 lie on the Cytoplasmic side of the membrane; sequence SPHMMVLLNA…NAKGNYLYMF (381 aa). Residues 429-665 form the ABC transporter 1 domain; sequence VKFENVHFRY…GGRYFDLVKA (237 aa). Residue 464–471 coordinates ATP; sequence GHSGCGKS. Residues 671–721 form a disordered region; that stretch reads DPEATEEFEEEEIDLDDTSRSSRRSSMTSARSGSEAFRRGNSLNDSFSGSK. Positions 673 to 686 are enriched in acidic residues; it reads EATEEFEEEEIDLD. Over residues 694 to 704 the composition is skewed to low complexity; sequence RSSMTSARSGS. Polar residues predominate over residues 711 to 721; that stretch reads NSLNDSFSGSK. The ABC transmembrane type-1 2 domain occupies 766–1053; the sequence is FLGTVFALIR…SAQYFPEFVK (288 aa). A helical transmembrane segment spans residues 767–789; that stretch reads LGTVFALIRGLELPALALIFGWV. The Extracellular portion of the chain corresponds to 790–805; it reads FEGFTFVPYGGRMMHR. A helical transmembrane segment spans residues 806-826; the sequence is MAMAVIAFASVGVGVWFSQLA. The Cytoplasmic segment spans residues 827–886; the sequence is SSVLFAVVSENLSMRFRVQSFRNLLYQDASYFDNPAHAPGKLITRLASDAPNIKAVVDAR. A helical membrane pass occupies residues 887–907; that stretch reads MLQVIYALAAIIANIAIAFIY. The Extracellular portion of the chain corresponds to 908 to 910; the sequence is CWQ. Residues 911-931 form a helical membrane-spanning segment; the sequence is IGILGTSLILLLAFVMIGLAY. Topologically, residues 932–996 are cytoplasmic; that stretch reads KISLMNVEQI…KGMIEAINYS (65 aa). A helical membrane pass occupies residues 997–1017; it reads LTQSFMYFMMCFTYAVGIRII. Over 1018 to 1030 the chain is Extracellular; it reads YQGDKSSDDTFKG. A helical transmembrane segment spans residues 1031 to 1051; that stretch reads IIAMMLGAVAVMNSAQYFPEF. The Cytoplasmic portion of the chain corresponds to 1052 to 1327; sequence VKAKTAAGML…KLIKKQDLAV (276 aa). The ABC transporter 2 domain maps to 1086–1322; the sequence is ILFENVKFSY…KGRYYKLIKK (237 aa). Residue 1121 to 1128 coordinates ATP; sequence GPSGSGKS.

It belongs to the ABC transporter superfamily. ABCB family. Multidrug resistance exporter (TC 3.A.1.201) subfamily. Expressed in pharyngeal epithelial cells that surround the anterior pharyngeal cuticle. Shares same expression pattern as sms-5.

Its subcellular location is the apical cell membrane. In terms of biological role, contributes to the establishment of a polar lipid barrier to block small molecule passage into the pharyngeal cuticle. Probably exports polar lipids into the developing pharyngeal cuticle to protect against xenobiotic insult. Likely functions in the same pathway as sphingomyelin synthase sms-5. In Caenorhabditis elegans, this protein is P-glycoprotein 14.